The chain runs to 198 residues: MSWIRIRRSGVLLLALVLSGCINQQQQPQPAAPVEPVTPPVNVPQPPKAEPGQNVPPPPKMQPLNWSATVSPLVGQMLKADGINAGNVLLVDNVKNSTNGSLQSAKATAALLNSLENNGQFSLVTPQQLAAARQTLGLSADDSLVSRSKAIGLARYVGAQYVLYSNAEGDIKSPSLQLQLMLVQTGEIIWSGSGAVVH.

A signal peptide spans 1-20 (MSWIRIRRSGVLLLALVLSG). Residue cysteine 21 is the site of N-palmitoyl cysteine attachment. Cysteine 21 is lipidated: S-diacylglycerol cysteine. Positions 28–62 (PQPAAPVEPVTPPVNVPQPPKAEPGQNVPPPPKMQ) are disordered. The span at 30-61 (PAAPVEPVTPPVNVPQPPKAEPGQNVPPPPKM) shows a compositional bias: pro residues.

Belongs to the LpoB family. In terms of assembly, interacts with PBP1b.

The protein resides in the cell outer membrane. Regulator of peptidoglycan synthesis that is essential for the function of penicillin-binding protein 1B (PBP1b). The sequence is that of Penicillin-binding protein activator LpoB from Erwinia amylovora (strain CFBP1430).